We begin with the raw amino-acid sequence, 118 residues long: Nitrogenase-stabilizing/protective protein NifW (118 aa).

Belongs to the NifW family. As to quaternary structure, homotrimer; associates with NifD.

Its function is as follows. May protect the nitrogenase Fe-Mo protein from oxidative damage. The protein is Nitrogenase-stabilizing/protective protein NifW of Rhodopseudomonas palustris (strain BisB5).